The following is a 249-amino-acid chain: Triosephosphate isomerase (249 aa).

Substrate contacts are provided by Asn-12 and Lys-14. Lys-14 is modified (N6-acetyllysine). Tyr-68 carries the post-translational modification 3'-nitrotyrosine. Residue Ser-80 is modified to Phosphoserine. His-96 (electrophile) is an active-site residue. Ser-106 carries the phosphoserine modification. Residue Lys-142 forms a Glycyl lysine isopeptide (Lys-Gly) (interchain with G-Cter in SUMO1) linkage. At Lys-149 the chain carries N6-succinyllysine. At Lys-156 the chain carries N6-acetyllysine; alternate. Lys-156 bears the N6-succinyllysine; alternate mark. Ser-159 is modified (phosphoserine). The active-site Proton acceptor is the Glu-166. Thr-173 is modified (phosphothreonine). Lys-194 is subject to N6-acetyllysine; alternate. At Lys-194 the chain carries N6-succinyllysine; alternate. Lys-194 is subject to N6-methyllysine; alternate. Ser-198 carries the phosphoserine modification. Residue Tyr-209 is modified to 3'-nitrotyrosine. Ser-212 carries the phosphoserine modification. Position 214 is a phosphothreonine (Thr-214). A Phosphoserine modification is found at Ser-223. Residue Lys-238 is modified to N6-acetyllysine.

Belongs to the triosephosphate isomerase family. As to quaternary structure, homodimer.

The protein resides in the cytoplasm. The catalysed reaction is dihydroxyacetone phosphate = methylglyoxal + phosphate. The enzyme catalyses D-glyceraldehyde 3-phosphate = dihydroxyacetone phosphate. It functions in the pathway carbohydrate degradation; glycolysis; D-glyceraldehyde 3-phosphate from glycerone phosphate: step 1/1. It participates in carbohydrate biosynthesis; gluconeogenesis. Functionally, triosephosphate isomerase is an extremely efficient metabolic enzyme that catalyzes the interconversion between dihydroxyacetone phosphate (DHAP) and D-glyceraldehyde-3-phosphate (G3P) in glycolysis and gluconeogenesis. In terms of biological role, it is also responsible for the non-negligible production of methylglyoxal a reactive cytotoxic side-product that modifies and can alter proteins, DNA and lipids. This chain is Triosephosphate isomerase (TPI1), found in Canis lupus familiaris (Dog).